The chain runs to 510 residues: Ribose import ATP-binding protein RbsA 1 (510 aa).

ABC transporter domains are found at residues leucine 20–aspartate 256 and valine 266–alanine 510. An ATP-binding site is contributed by glycine 52 to serine 59.

The protein belongs to the ABC transporter superfamily. Ribose importer (TC 3.A.1.2.1) family. In terms of assembly, the complex is composed of an ATP-binding protein (RbsA), two transmembrane proteins (RbsC) and a solute-binding protein (RbsB).

Its subcellular location is the cell inner membrane. The enzyme catalyses D-ribose(out) + ATP + H2O = D-ribose(in) + ADP + phosphate + H(+). Its function is as follows. Part of the ABC transporter complex RbsABC involved in ribose import. Responsible for energy coupling to the transport system. The protein is Ribose import ATP-binding protein RbsA 1 of Agrobacterium fabrum (strain C58 / ATCC 33970) (Agrobacterium tumefaciens (strain C58)).